A 250-amino-acid polypeptide reads, in one-letter code: 1-(5-phosphoribosyl)-5-[(5-phosphoribosylamino)methylideneamino] imidazole-4-carboxamide isomerase (250 aa).

Catalysis depends on D10, which acts as the Proton acceptor. Residue D131 is the Proton donor of the active site.

The protein belongs to the HisA/HisF family.

Its subcellular location is the cytoplasm. It catalyses the reaction 1-(5-phospho-beta-D-ribosyl)-5-[(5-phospho-beta-D-ribosylamino)methylideneamino]imidazole-4-carboxamide = 5-[(5-phospho-1-deoxy-D-ribulos-1-ylimino)methylamino]-1-(5-phospho-beta-D-ribosyl)imidazole-4-carboxamide. Its pathway is amino-acid biosynthesis; L-histidine biosynthesis; L-histidine from 5-phospho-alpha-D-ribose 1-diphosphate: step 4/9. This is 1-(5-phosphoribosyl)-5-[(5-phosphoribosylamino)methylideneamino] imidazole-4-carboxamide isomerase from Desulfitobacterium hafniense (strain DSM 10664 / DCB-2).